Reading from the N-terminus, the 751-residue chain is Polyribonucleotide nucleotidyltransferase (751 aa).

Residues Asp-528 and Asp-534 each contribute to the Mg(2+) site. Positions 594-653 (PRVISVTVPVSKIGEVIGPKGKMINQIQEDTGTDISIEDDGTVYIGATDGPSAEAARSAI) constitute a KH domain. The 73-residue stretch at 665–737 (GERYLGTVVK…DRGKLSLAPV (73 aa)) folds into the S1 motif domain.

Belongs to the polyribonucleotide nucleotidyltransferase family. Mg(2+) is required as a cofactor.

It is found in the cytoplasm. The catalysed reaction is RNA(n+1) + phosphate = RNA(n) + a ribonucleoside 5'-diphosphate. Functionally, involved in mRNA degradation. Catalyzes the phosphorolysis of single-stranded polyribonucleotides processively in the 3'- to 5'-direction. This chain is Polyribonucleotide nucleotidyltransferase, found in Kocuria rhizophila (strain ATCC 9341 / DSM 348 / NBRC 103217 / DC2201).